The sequence spans 158 residues: PTS system fructose-specific EIIB component (158 aa).

In terms of domain architecture, PTS EIIB type-2 spans 1 to 98 (MKLVAVTSCP…AEAVVQKAVE (98 aa)). Cysteine 9 serves as the catalytic Phosphocysteine intermediate. A Phosphocysteine; by EIIA modification is found at cysteine 9. The tract at residues 104 to 147 (KTGSVTFGSGDDGEDADVGADDSSDDADAAESDEPVRRGGDPEK) is disordered. Residues 114–136 (DDGEDADVGADDSSDDADAAESD) are compositionally biased toward acidic residues. The segment covering 137–147 (EPVRRGGDPEK) has biased composition (basic and acidic residues).

The protein resides in the cytoplasm. The enzyme catalyses D-fructose(out) + N(pros)-phospho-L-histidyl-[protein] = D-fructose 1-phosphate(in) + L-histidyl-[protein]. Functionally, the phosphoenolpyruvate-dependent sugar phosphotransferase system (sugar PTS), a major carbohydrate active transport system, catalyzes the phosphorylation of incoming sugar substrates concomitantly with their translocation across the cell membrane. The enzyme II PtfABC PTS system is involved in fructose transport. This is PTS system fructose-specific EIIB component from Haloferax volcanii (strain ATCC 29605 / DSM 3757 / JCM 8879 / NBRC 14742 / NCIMB 2012 / VKM B-1768 / DS2) (Halobacterium volcanii).